Here is a 462-residue protein sequence, read N- to C-terminus: Notoamide biosynthesis cluster protein O' (462 aa).

The next 3 helical transmembrane spans lie at 16-36 (IFNV…WAAM), 55-75 (AVIF…IAKI), and 79-99 (WAFA…YCNV). A glycan (N-linked (GlcNAc...) asparagine) is linked at Asn102. Helical transmembrane passes span 104–124 (SWYI…FWLT), 143–163 (AYWL…TLGV), 173–193 (ISVQ…FVAA), and 233–253 (ILLL…FSTY). An N-linked (GlcNAc...) asparagine glycan is attached at Asn254. Helical transmembrane passes span 265 to 285 (LSSL…GFFL), 297 to 317 (MAAF…AMVV), 343 to 363 (VYIL…WLIG), and 404 to 424 (AVAV…FVIY). The disordered stretch occupies residues 443–462 (LQTSGEGSHDIMDANGKSDD). The segment covering 449–462 (GSHDIMDANGKSDD) has biased composition (basic and acidic residues).

It belongs to the unc-93 family.

Its subcellular location is the membrane. Part of the gene cluster that mediates the biosynthesis of notoamide, a fungal indole alkaloid that belongs to a family of natural products containing a characteristic bicyclo[2.2.2]diazaoctane core. The first step of notoamide biosynthesis involves coupling of L-proline and L-tryptophan by the bimodular NRPS notE', to produce cyclo-L-tryptophan-L-proline called brevianamide F. The reverse prenyltransferase notF' then acts as a deoxybrevianamide E synthase and converts brevianamide F to deoxybrevianamide E via reverse prenylation at C-2 of the indole ring leading to the bicyclo[2.2.2]diazaoctane core. Deoxybrevianamide E is further hydroxylated at C-6 of the indole ring, likely catalyzed by the cytochrome P450 monooxygenase notG', to yield 6-hydroxy-deoxybrevianamide E. 6-hydroxy-deoxybrevianamide E is a specific substrate of the prenyltransferase notC' for normal prenylation at C-7 to produce 6-hydroxy-7-prenyl-deoxybrevianamide, also called notoamide S. As the proposed pivotal branching point in notoamide biosynthesis, notoamide S can be diverted to notoamide E through an oxidative pyran ring closure putatively catalyzed by either notH' cytochrome P450 monooxygenase or the notD' FAD-linked oxidoreductase. This step would be followed by an indole 2,3-epoxidation-initiated pinacol-like rearrangement catalyzed by the notB' FAD-dependent monooxygenase leading to the formation of notoamide C and notoamide D. On the other hand notoamide S is converted to notoamide T by notH' (or notD'), a bifunctional oxidase that also functions as the intramolecular Diels-Alderase responsible for generation of (-)-notoamide T. To generate antipodal (+)-notoaminide T, notH (or notD) in Aspergillus strain MF297-2 is expected to catalyze a Diels-Alder reaction leading to the opposite stereochemistry. The remaining oxidoreductase notD' (or notH') likely catalyzes the oxidative pyran ring formation to yield (-)-stephacidin A. The FAD-dependent monooxygenase notI' is highly similar to notB' and is predicted to catalyze a similar conversion from (-)-stephacidin A to (+)-notoamide B via the 2,3-epoxidation of (-)-stephacidin A followed by a pinacol-type rearrangement. Finally, it remains unclear which enzyme could be responsible for the final hydroxylation steps leading to notoamide A and sclerotiamide. The function of notO' in the notoamide biosynthesis has not been determined yet. This Aspergillus versicolor protein is Notoamide biosynthesis cluster protein O'.